Reading from the N-terminus, the 384-residue chain is MTAATLVTLALSLSLAQHDAAPAPAAAPVEQHGAPAPEAAAPDAHAAPAGEHGAAVEAHAAAAGEHGDAAGHEGGHDESLGAVMMHHVTDGYVIEHPGFCHGALAWNCEWDLRETFGDALRFGALDMTPTKHVMMMWFASALLLVVVLAAVRKKSLVPRGLYNFIEVLVAFVRNEIAVKNIGERDADRFVPYLVTAFFFILFLNLFGLIPFSATATANLSVTVALALFTFLITQYAAIRAMGVGGYLAHLTGGVPKSLAPLWIIMIPVEFLGLFTKPFALTVRLFANMVAGHFVILALLGLIFALGTPWVAFGSVPMALGIFLLELFVAFVQAYIFTMLSSLFIGAGLVHHGDDHGHAEEHGHAGPGMGSEHGSHVAGASPGHG.

Positions 22–60 are disordered; that stretch reads PAPAAAPVEQHGAPAPEAAAPDAHAAPAGEHGAAVEAHA. 6 helical membrane passes run 131-151, 189-209, 218-238, 258-278, 293-313, and 319-339; these read KHVMMMWFASALLLVVVLAAV, FVPYLVTAFFFILFLNLFGLI, NLSVTVALALFTFLITQYAAI, LAPLWIIMIPVEFLGLFTKPF, FVILALLGLIFALGTPWVAFG, and LGIFLLELFVAFVQAYIFTML. The disordered stretch occupies residues 355 to 384; sequence HGHAEEHGHAGPGMGSEHGSHVAGASPGHG.

This sequence belongs to the ATPase A chain family. In terms of assembly, F-type ATPases have 2 components, CF(1) - the catalytic core - and CF(0) - the membrane proton channel. CF(1) has five subunits: alpha(3), beta(3), gamma(1), delta(1), epsilon(1). CF(0) has three main subunits: a(1), b(2) and c(9-12). The alpha and beta chains form an alternating ring which encloses part of the gamma chain. CF(1) is attached to CF(0) by a central stalk formed by the gamma and epsilon chains, while a peripheral stalk is formed by the delta and b chains.

The protein resides in the cell inner membrane. Its function is as follows. Key component of the proton channel; it plays a direct role in the translocation of protons across the membrane. The protein is ATP synthase subunit a of Anaeromyxobacter dehalogenans (strain 2CP-1 / ATCC BAA-258).